Here is a 211-residue protein sequence, read N- to C-terminus: Probable GTP-binding protein EngB (211 aa).

Residues 30–204 form the EngB-type G domain; sequence EGFEVAFAGR…YTVLADWMEL (175 aa). Residues 38-45, 64-68, 82-85, 149-152, and 182-185 contribute to the GTP site; these read GRSNAGKS, GRTQL, DLPG, TKAD, and LFSA. 2 residues coordinate Mg(2+): S45 and T66.

This sequence belongs to the TRAFAC class TrmE-Era-EngA-EngB-Septin-like GTPase superfamily. EngB GTPase family. Mg(2+) serves as cofactor.

Functionally, necessary for normal cell division and for the maintenance of normal septation. The sequence is that of Probable GTP-binding protein EngB from Pseudomonas savastanoi pv. phaseolicola (strain 1448A / Race 6) (Pseudomonas syringae pv. phaseolicola (strain 1448A / Race 6)).